A 27-amino-acid chain; its full sequence is uncharacterized protein (27 aa).

This is an uncharacterized protein from Archaeoglobus fulgidus (strain ATCC 49558 / DSM 4304 / JCM 9628 / NBRC 100126 / VC-16).